Here is a 715-residue protein sequence, read N- to C-terminus: Coiled-coil domain-containing protein 13 (715 aa).

Coiled-coil stretches lie at residues 16–105 (KAMQ…KERD) and 134–458 (ATKI…NVHY). Residues 20–65 (EMQHKRLQKQMEKKREKELSLKSRADDQEEPLEVSDGLSLLHAGEP) are disordered. Over residues 28–45 (KQMEKKREKELSLKSRAD) the composition is skewed to basic and acidic residues. Phosphoserine occurs at positions 258, 469, and 536. Disordered stretches follow at residues 482 to 541 (EDPG…EQKG) and 607 to 645 (LEPGKASASQRAAPRTKTGLPTSNNRHNPTGSEKKDPSF). Positions 554-608 (QAAEVERDRLTEFVTVLQKRVEESNSKLLESERKLQEERHRTVVLEQHLEKIRLE) form a coiled coil. The segment covering 625 to 637 (GLPTSNNRHNPTG) has biased composition (polar residues). Residues 653-683 (VESQMEELTTRLAIQVEENEMLKAALGSALR) adopt a coiled-coil conformation.

As to quaternary structure, interacts with PCM1, CEP290 and PCNT.

It localises to the cytoplasm. It is found in the cytoskeleton. The protein localises to the microtubule organizing center. The protein resides in the centrosome. Its subcellular location is the centriolar satellite. It localises to the cilium basal body. In terms of biological role, required for primary cilia formation and promotes the localization of the ciliopathy protein BBS4 to both centriolar satellites and cilia. In Homo sapiens (Human), this protein is Coiled-coil domain-containing protein 13.